We begin with the raw amino-acid sequence, 178 residues long: Probable inosine/xanthosine triphosphatase (178 aa).

Belongs to the YjjX NTPase family. Homodimer. It depends on Mg(2+) as a cofactor. The cofactor is Mn(2+).

It catalyses the reaction XTP + H2O = XDP + phosphate + H(+). The enzyme catalyses ITP + H2O = IDP + phosphate + H(+). Functionally, phosphatase that hydrolyzes non-canonical purine nucleotides such as XTP and ITP to their respective diphosphate derivatives. Probably excludes non-canonical purines from DNA/RNA precursor pool, thus preventing their incorporation into DNA/RNA and avoiding chromosomal lesions. In Pyrobaculum calidifontis (strain DSM 21063 / JCM 11548 / VA1), this protein is Probable inosine/xanthosine triphosphatase.